The primary structure comprises 476 residues: Aspartyl/glutamyl-tRNA(Asn/Gln) amidotransferase subunit B (476 aa).

The protein belongs to the GatB/GatE family. GatB subfamily. In terms of assembly, heterotrimer of A, B and C subunits.

It catalyses the reaction L-glutamyl-tRNA(Gln) + L-glutamine + ATP + H2O = L-glutaminyl-tRNA(Gln) + L-glutamate + ADP + phosphate + H(+). The enzyme catalyses L-aspartyl-tRNA(Asn) + L-glutamine + ATP + H2O = L-asparaginyl-tRNA(Asn) + L-glutamate + ADP + phosphate + 2 H(+). In terms of biological role, allows the formation of correctly charged Asn-tRNA(Asn) or Gln-tRNA(Gln) through the transamidation of misacylated Asp-tRNA(Asn) or Glu-tRNA(Gln) in organisms which lack either or both of asparaginyl-tRNA or glutaminyl-tRNA synthetases. The reaction takes place in the presence of glutamine and ATP through an activated phospho-Asp-tRNA(Asn) or phospho-Glu-tRNA(Gln). This chain is Aspartyl/glutamyl-tRNA(Asn/Gln) amidotransferase subunit B, found in Neisseria meningitidis serogroup C / serotype 2a (strain ATCC 700532 / DSM 15464 / FAM18).